A 604-amino-acid polypeptide reads, in one-letter code: Inositol-3-phosphate synthase 1 (604 aa).

The NAD(+) site is built by Gly88, Gly89, Asn90, Asn91, Asp163, Ser198, Val199, Gln210, Arg213, Ser251, Gly252, Asn253, Thr254, Ser303, Asp327, Leu328, Thr330, Asn361, Asn362, Asp363, Lys376, Gly456, Asp457, Asp485, and Ser486.

It belongs to the myo-inositol 1-phosphate synthase family. The cofactor is NAD(+).

The enzyme catalyses D-glucose 6-phosphate = 1D-myo-inositol 3-phosphate. The protein operates within polyol metabolism; myo-inositol biosynthesis; myo-inositol from D-glucose 6-phosphate: step 1/2. Functionally, key enzyme in myo-inositol biosynthesis pathway that catalyzes the conversion of glucose 6-phosphate to 1-myo-inositol 1-phosphate in a NAD-dependent manner. Rate-limiting enzyme in the synthesis of all inositol-containing compounds. De novo-synthesized myo-inositol is essential for incorporation into GPI (glycosylphosphatidylinositol) glycolipids during intra-erythrocytic development. The sequence is that of Inositol-3-phosphate synthase 1 from Plasmodium falciparum (isolate 3D7).